A 429-amino-acid chain; its full sequence is Apolipoprotein A-IV (429 aa).

Residues M1 to A20 form the signal peptide. A run of 13 repeats spans residues D33–L54, A60–V81, P82–R103, P115–E136, P137–T158, P159–R180, P181–T202, P203–A224, P225–K246, K247–A268, P269–Q286, K287–E308, and P309–G330. The 13 X 22 AA approximate tandem repeats stretch occupies residues D33–G330. Positions K359–S429 are disordered. The segment covering Q381–Q420 has biased composition (low complexity).

It belongs to the apolipoprotein A1/A4/E family. In terms of assembly, homodimer. In terms of processing, phosphorylation sites are present in the extracellular medium. Secreted in plasma.

It is found in the secreted. May have a role in chylomicrons and VLDL secretion and catabolism. Required for efficient activation of lipoprotein lipase by ApoC-II; potent activator of LCAT. Apoa-IV is a major component of HDL and chylomicrons. In Macaca fascicularis (Crab-eating macaque), this protein is Apolipoprotein A-IV (APOA4).